A 307-amino-acid polypeptide reads, in one-letter code: Transcriptional repressor scratch 2 (307 aa).

The SNAG domain stretch occupies residues 1 to 20 (MPRSFLVKKIKGDGFQCSGV). Disordered regions lie at residues 34–90 (LPGA…PQSS) and 116–148 (GRSR…AGAQ). The segment covering 124–148 (GGGGDAGGSGDAGGAGGRAGRAGAQ) has biased composition (gly residues). 4 consecutive C2H2-type zinc fingers follow at residues 155–177 (HACA…KQTH), 186–208 (RKCP…LLTH), 212–234 (HKCG…MRSH), and 240–262 (FGCA…MQTH). The C2H2-type 5; atypical zinc-finger motif lies at 268–291 (YRCRQCDKSFALKSYLHKHCEAAC).

The protein belongs to the snail C2H2-type zinc-finger protein family.

Its subcellular location is the nucleus. Its function is as follows. May be involved in transcriptional regulation. The sequence is that of Transcriptional repressor scratch 2 (SCRT2) from Homo sapiens (Human).